The primary structure comprises 240 residues: Uridylate kinase (240 aa).

ATP is bound at residue 13-16 (KASG). An involved in allosteric activation by GTP region spans residues 21–26 (GSQGFG). Gly-55 contacts UMP. Residues Gly-56 and Arg-60 each contribute to the ATP site. Residues Asp-75 and 136–143 (TGNPFFTT) each bind UMP. ATP is bound by residues Thr-163, Gln-164, Tyr-169, and Asp-172.

Belongs to the UMP kinase family. As to quaternary structure, homohexamer.

The protein localises to the cytoplasm. The enzyme catalyses UMP + ATP = UDP + ADP. The protein operates within pyrimidine metabolism; CTP biosynthesis via de novo pathway; UDP from UMP (UMPK route): step 1/1. With respect to regulation, allosterically activated by GTP. Inhibited by UTP. Catalyzes the reversible phosphorylation of UMP to UDP. This chain is Uridylate kinase, found in Rhizobium meliloti (strain 1021) (Ensifer meliloti).